A 372-amino-acid polypeptide reads, in one-letter code: Delta-type opioid receptor (372 aa).

Over 1-47 (MEPAPSAGAELQPPLFANASDAYPSACPSAGANASGPPGARSASSLA) the chain is Extracellular. N-linked (GlcNAc...) asparagine glycans are attached at residues N18 and N33. Residues 48 to 75 (LAIAITALYSAVCAVGLLGNVLVMFGIV) form a helical membrane-spanning segment. Residues 76–85 (RYTKMKTATN) lie on the Cytoplasmic side of the membrane. The helical transmembrane segment at 86-110 (IYIFNLALADALATSTLPFQSAKYL) threads the bilayer. The Extracellular segment spans residues 111–122 (METWPFGELLCK). Cysteines 121 and 198 form a disulfide. A helical membrane pass occupies residues 123–144 (AVLSIDYYNMFTSIFTLTMMSV). At 145-163 (DRYIAVCHPVKALDFRTPA) the chain is on the cytoplasmic side. The helical transmembrane segment at 164–186 (KAKLINICIWVLASGVGVPIMVM) threads the bilayer. Topologically, residues 187-206 (AVTRPRDGAVVCMLQFPSPS) are extracellular. A helical membrane pass occupies residues 207 to 238 (WYWDTVTKICVFLFAFVVPILIITVCYGLMLL). Topologically, residues 239-261 (RLRSVRLLSGSKEKDRSLRRITR) are cytoplasmic. The chain crosses the membrane as a helical span at residues 262–284 (MVLVVVGAFVVCWAPIHIFVIVW). Over 285–299 (TLVDIDRRDPLVVAA) the chain is Extracellular. Residues 300–321 (LHLCIALGYANSSLNPVLYAFL) form a helical membrane-spanning segment. The Cytoplasmic portion of the chain corresponds to 322–372 (DENFKRCFRQLCRKPCGRPDPSSFSRAREATARERVTACTPSDGPGGGAAA). C333 carries S-palmitoyl cysteine lipidation. The disordered stretch occupies residues 340 to 372 (PDPSSFSRAREATARERVTACTPSDGPGGGAAA). Residues 347–357 (RAREATARERV) show a composition bias toward basic and acidic residues.

The protein belongs to the G-protein coupled receptor 1 family. May form homooligomers. Forms a heterodimer with OPRM1. Interacts with GPRASP1. Interacts with RTP4; the interaction promotes cell surface localization of the OPRD1-OPRM1 heterodimer. In terms of processing, N-glycosylated. Post-translationally, ubiquitinated. A basal ubiquitination seems not to be related to degradation. Ubiquitination is increased upon formation of OPRM1:OPRD1 oligomers leading to proteasomal degradation; the ubiquitination is diminished by RTP4. As to expression, detected in oocytes (at protein level). Detected in brain cortex, hypothalamus, hippocampus and olfactory bulb. Detected in oocytes.

The protein resides in the cell membrane. Its function is as follows. G-protein coupled receptor that functions as a receptor for endogenous enkephalins and for a subset of other opioids. Ligand binding causes a conformation change that triggers signaling via guanine nucleotide-binding proteins (G proteins) and modulates the activity of down-stream effectors, such as adenylate cyclase. Signaling leads to the inhibition of adenylate cyclase activity. Inhibits neurotransmitter release by reducing calcium ion currents and increasing potassium ion conductance. Plays a role in the perception of pain and in opiate-mediated analgesia. Plays a role in developing analgesic tolerance to morphine. This is Delta-type opioid receptor (OPRD1) from Homo sapiens (Human).